We begin with the raw amino-acid sequence, 305 residues long: Glycine--tRNA ligase alpha subunit (305 aa).

Belongs to the class-II aminoacyl-tRNA synthetase family. As to quaternary structure, tetramer of two alpha and two beta subunits.

The protein resides in the cytoplasm. It catalyses the reaction tRNA(Gly) + glycine + ATP = glycyl-tRNA(Gly) + AMP + diphosphate. This chain is Glycine--tRNA ligase alpha subunit, found in Streptococcus pneumoniae serotype 19F (strain G54).